The sequence spans 81 residues: Large ribosomal subunit protein uL24 (81 aa).

The protein belongs to the universal ribosomal protein uL24 family. In terms of assembly, part of the 50S ribosomal subunit.

Its function is as follows. One of two assembly initiator proteins, it binds directly to the 5'-end of the 23S rRNA, where it nucleates assembly of the 50S subunit. In terms of biological role, one of the proteins that surrounds the polypeptide exit tunnel on the outside of the subunit. This Chloroherpeton thalassium (strain ATCC 35110 / GB-78) protein is Large ribosomal subunit protein uL24.